We begin with the raw amino-acid sequence, 169 residues long: FAM231A/C-like protein LOC102723383 (169 aa).

The segment at 82–140 (LIRSGSSQNESQEDQGAGLISQAGLKADNRRESSTWANEVEDRRPQCTPALNLTPSHPH) is disordered.

This sequence belongs to the FAM231 family.

The polypeptide is FAM231A/C-like protein LOC102723383 (Homo sapiens (Human)).